The sequence spans 260 residues: 3-oxoadipate CoA-transferase subunit B (260 aa).

Residue E51 is part of the active site.

Belongs to the 3-oxoacid CoA-transferase subunit B family. In terms of assembly, heterotetramer composed of 2 A and 2 B subunits.

It catalyses the reaction 3-oxoadipate + succinyl-CoA = 3-oxoadipyl-CoA + succinate. It functions in the pathway aromatic compound metabolism; beta-ketoadipate pathway; acetyl-CoA and succinyl-CoA from 3-oxoadipate: step 1/2. The protein is 3-oxoadipate CoA-transferase subunit B (catJ) of Pseudomonas knackmussii (strain DSM 6978 / CCUG 54928 / LMG 23759 / B13).